The primary structure comprises 61 residues: Small ribosomal subunit protein uS14 (61 aa).

Residues Cys-24, Cys-27, Cys-40, and Cys-43 each contribute to the Zn(2+) site.

The protein belongs to the universal ribosomal protein uS14 family. Zinc-binding uS14 subfamily. Part of the 30S ribosomal subunit. Contacts proteins S3 and S10. The cofactor is Zn(2+).

Binds 16S rRNA, required for the assembly of 30S particles and may also be responsible for determining the conformation of the 16S rRNA at the A site. This chain is Small ribosomal subunit protein uS14, found in Mycoplasma mobile (strain ATCC 43663 / 163K / NCTC 11711) (Mesomycoplasma mobile).